Here is a 164-residue protein sequence, read N- to C-terminus: Phosphopantetheine adenylyltransferase (164 aa).

Ser9 lines the substrate pocket. ATP-binding positions include 9–10 and His17; that span reads SF. The substrate site is built by Lys41, Leu73, and Lys87. Residues 88 to 90, Glu98, and 123 to 129 contribute to the ATP site; these read GLR and HSFLSSS.

The protein belongs to the bacterial CoaD family. Homohexamer. Mg(2+) serves as cofactor.

The protein localises to the cytoplasm. The enzyme catalyses (R)-4'-phosphopantetheine + ATP + H(+) = 3'-dephospho-CoA + diphosphate. The protein operates within cofactor biosynthesis; coenzyme A biosynthesis; CoA from (R)-pantothenate: step 4/5. Functionally, reversibly transfers an adenylyl group from ATP to 4'-phosphopantetheine, yielding dephospho-CoA (dPCoA) and pyrophosphate. In Rubrobacter xylanophilus (strain DSM 9941 / JCM 11954 / NBRC 16129 / PRD-1), this protein is Phosphopantetheine adenylyltransferase.